Consider the following 553-residue polypeptide: Arginine--tRNA ligase (553 aa).

The short motif at 132–140 (PTGDLHIGH) is the 'HIGH' region element.

Belongs to the class-I aminoacyl-tRNA synthetase family. As to quaternary structure, monomer.

The protein localises to the cytoplasm. It carries out the reaction tRNA(Arg) + L-arginine + ATP = L-arginyl-tRNA(Arg) + AMP + diphosphate. The polypeptide is Arginine--tRNA ligase (Staphylococcus aureus (strain N315)).